The following is a 286-amino-acid chain: 5-amino-6-(5-phospho-D-ribitylamino)uracil phosphatase YwtE (286 aa).

The active-site Nucleophile is the D7. D7 serves as a coordination point for Mg(2+). Phosphate is bound at residue L8. D9 is a binding site for Mg(2+). Phosphate contacts are provided by residues 41 to 42 and K210; that span reads TG. The Mg(2+) site is built by D233 and S234. Residue N236 participates in phosphate binding.

It belongs to the HAD-like hydrolase superfamily. Cof family. Mg(2+) is required as a cofactor.

It carries out the reaction 5-amino-6-(5-phospho-D-ribitylamino)uracil + H2O = 5-amino-6-(D-ribitylamino)uracil + phosphate. The protein operates within cofactor biosynthesis; riboflavin biosynthesis; 5-amino-6-(D-ribitylamino)uracil from GTP: step 4/4. Functionally, catalyzes the dephosphorylation of the riboflavin precursor 5-amino-6-(5-phospho-D-ribitylamino)uracil and of flavin mononucleotide (FMN) in vitro. Also catalyzes the dephosphorylation of phosphorylated 5-6 carbon sugars and monophosphate nucleotides (NMP) in vitro. The polypeptide is 5-amino-6-(5-phospho-D-ribitylamino)uracil phosphatase YwtE (ywtE) (Bacillus subtilis (strain 168)).